A 456-amino-acid chain; its full sequence is Chromosomal replication initiator protein DnaA (456 aa).

A domain I, interacts with DnaA modulators region spans residues 1-79 (MSQEIWADVL…QHPQVSFQVL (79 aa)). Residues 79 to 112 (LPASQDALLLPSDPPPAPISPGRAPAPPPADNRK) form a domain II region. The disordered stretch occupies residues 89–112 (PSDPPPAPISPGRAPAPPPADNRK). The span at 90 to 108 (SDPPPAPISPGRAPAPPPA) shows a compositional bias: pro residues. The domain III, AAA+ region stretch occupies residues 113 to 329 (TLNPKYTFEN…GALMRVVAFS (217 aa)). ATP contacts are provided by Gly157, Gly159, Lys160, and Thr161. The segment at 330–456 (SLNNVPFSRA…KGLEDEDSRA (127 aa)) is domain IV, binds dsDNA.

It belongs to the DnaA family. As to quaternary structure, oligomerizes as a right-handed, spiral filament on DNA at oriC.

It is found in the cytoplasm. In terms of biological role, plays an essential role in the initiation and regulation of chromosomal replication. ATP-DnaA binds to the origin of replication (oriC) to initiate formation of the DNA replication initiation complex once per cell cycle. Binds the DnaA box (a 9 base pair repeat at the origin) and separates the double-stranded (ds)DNA. Forms a right-handed helical filament on oriC DNA; dsDNA binds to the exterior of the filament while single-stranded (ss)DNA is stabiized in the filament's interior. The ATP-DnaA-oriC complex binds and stabilizes one strand of the AT-rich DNA unwinding element (DUE), permitting loading of DNA polymerase. After initiation quickly degrades to an ADP-DnaA complex that is not apt for DNA replication. Binds acidic phospholipids. This Deinococcus deserti (strain DSM 17065 / CIP 109153 / LMG 22923 / VCD115) protein is Chromosomal replication initiator protein DnaA.